Here is an 88-residue protein sequence, read N- to C-terminus: Probable Fe(2+)-trafficking protein (88 aa).

The protein belongs to the Fe(2+)-trafficking protein family.

In terms of biological role, could be a mediator in iron transactions between iron acquisition and iron-requiring processes, such as synthesis and/or repair of Fe-S clusters in biosynthetic enzymes. This chain is Probable Fe(2+)-trafficking protein, found in Neisseria gonorrhoeae (strain ATCC 700825 / FA 1090).